An 896-amino-acid polypeptide reads, in one-letter code: Translation initiation factor IF-2 (896 aa).

Basic and acidic residues-rich tracts occupy residues 94-159 and 166-219; these read KRDP…KDKV and DMTK…EKNW. The interval 94 to 307 is disordered; that stretch reads KRDPQEAERL…GSALQQGFQK (214 aa). Over residues 256-271 the composition is skewed to basic residues; sequence GRGRNAKAARPAKKGN. The span at 272–285 shows a compositional bias: basic and acidic residues; it reads KHAESKADREEARA. The region spanning 395-564 is the tr-type G domain; it reads PRAPVVTIMG…LLQAEVLELK (170 aa). The interval 404–411 is G1; it reads GHVDHGKT. GTP is bound at residue 404-411; sequence GHVDHGKT. A G2 region spans residues 429–433; that stretch reads GITQH. Residues 450–453 are G3; that stretch reads DTPG. GTP-binding positions include 450–454 and 504–507; these read DTPGH and NKID. A G4 region spans residues 504–507; sequence NKID. Residues 540–542 form a G5 region; the sequence is SAK.

Belongs to the TRAFAC class translation factor GTPase superfamily. Classic translation factor GTPase family. IF-2 subfamily.

It is found in the cytoplasm. Functionally, one of the essential components for the initiation of protein synthesis. Protects formylmethionyl-tRNA from spontaneous hydrolysis and promotes its binding to the 30S ribosomal subunits. Also involved in the hydrolysis of GTP during the formation of the 70S ribosomal complex. The polypeptide is Translation initiation factor IF-2 (infB) (Klebsiella oxytoca).